The sequence spans 176 residues: MTIGVDLSTDLQDWIRLSGMNMIQGSETNDGRTILWNKGGEVRYFIDRLAGWYVITSSDRMSREGYEFAAASMSVIEKYLYGYFGGSVRSERELPAIRAPFQPEELMPEYSIGTMTFAGRQRDTLIDSSGTVVAITAADRLVELSHYLDVSVNVIKDSFLDSEGKPLFTLWKDYKG.

In terms of assembly, interacts with the tuberculosis necrotizing toxin (TNT) homolog, the C-terminal domain of the outer membrane channel protein CpnT.

Functionally, antitoxin for tuberculosis necrotizing toxin (TNT) homolog. Acts by binding directly to TNT, which inhibits NAD(+) glycohydrolase activity of TNT and protects M.bovis from self-poisoning. This Mycobacterium bovis (strain BCG / Pasteur 1173P2) protein is Immunity factor for TNT homolog.